Consider the following 463-residue polypeptide: tRNA-2-methylthio-N(6)-dimethylallyladenosine synthase (463 aa).

Positions 5–125 constitute an MTTase N-terminal domain; that stretch reads RKLHIKSYGC…LPQLLAKAEQ (121 aa). Positions 14, 50, 88, 166, 170, and 173 each coordinate [4Fe-4S] cluster. Residues 152–384 enclose the Radical SAM core domain; the sequence is RARGISAFVT…QQLIDQQQSA (233 aa). The TRAM domain maps to 387 to 449; that stretch reads KAAIGRTVEV…RYSLLGELAS (63 aa).

This sequence belongs to the methylthiotransferase family. MiaB subfamily. Monomer. [4Fe-4S] cluster is required as a cofactor.

It localises to the cytoplasm. The catalysed reaction is N(6)-dimethylallyladenosine(37) in tRNA + (sulfur carrier)-SH + AH2 + 2 S-adenosyl-L-methionine = 2-methylsulfanyl-N(6)-dimethylallyladenosine(37) in tRNA + (sulfur carrier)-H + 5'-deoxyadenosine + L-methionine + A + S-adenosyl-L-homocysteine + 2 H(+). Functionally, catalyzes the methylthiolation of N6-(dimethylallyl)adenosine (i(6)A), leading to the formation of 2-methylthio-N6-(dimethylallyl)adenosine (ms(2)i(6)A) at position 37 in tRNAs that read codons beginning with uridine. This is tRNA-2-methylthio-N(6)-dimethylallyladenosine synthase from Rhodopseudomonas palustris (strain TIE-1).